The chain runs to 82 residues: Penaeidin-3b (82 aa).

The N-terminal stretch at 1–19 is a signal peptide; sequence MRLVVCLVFLASFALVCQG. At Q20 the chain carries Pyrrolidone carboxylic acid. 3 disulfide bridges follow: C51-C66, C55-C73, and C67-C74. S81 bears the Serine amide mark.

The protein belongs to the penaeidin family. Higher expression in hemocytes and to a lesser extent in heart, testis, gills, intestine, lymphoid organ and hepatopancreas. Traces in eyes and subcuticular epithelium. Not present in the brain.

It localises to the cytoplasmic granule. In terms of biological role, antibacterial activity against M.luteus and E.coli bacteria. Antifungal activity against N.crassa and F.oxysporum. Presents chitin-binding activity. This is Penaeidin-3b from Penaeus vannamei (Whiteleg shrimp).